We begin with the raw amino-acid sequence, 241 residues long: Pyridoxal phosphate phosphatase PHOSPHO2 (241 aa).

The Nucleophile role is filled by D8. 2 residues coordinate Mg(2+): D8 and D10. The active-site Proton donor is D10. Substrate-binding residues include D19 and D99. D179 is a binding site for Mg(2+).

This sequence belongs to the HAD-like hydrolase superfamily. PHOSPHO family. It depends on Mg(2+) as a cofactor.

The catalysed reaction is pyridoxal 5'-phosphate + H2O = pyridoxal + phosphate. Phosphatase that has high activity toward pyridoxal 5'-phosphate (PLP). Also active at much lower level toward pyrophosphate, phosphoethanolamine (PEA), phosphocholine (PCho), phospho-l-tyrosine, fructose-6-phosphate, p-nitrophenyl phosphate, and h-glycerophosphate. The polypeptide is Pyridoxal phosphate phosphatase PHOSPHO2 (Phospho2) (Rattus norvegicus (Rat)).